The chain runs to 162 residues: Glutathione peroxidase-like peroxiredoxin 2 (162 aa).

The Cysteine sulfenic acid (-SOH) intermediate role is filled by Cys-37. Cys-37 and Cys-83 form a disulfide bridge.

This sequence belongs to the glutathione peroxidase family. As to quaternary structure, monomer.

The protein resides in the cytoplasm. It localises to the nucleus. Its subcellular location is the mitochondrion outer membrane. It is found in the mitochondrion inner membrane. The catalysed reaction is a hydroperoxide + [thioredoxin]-dithiol = an alcohol + [thioredoxin]-disulfide + H2O. Its function is as follows. Glutathione peroxidase-like protein that protects cells from phospholipid hydroperoxides and nonphospholipid peroxides during oxidative stress. Plays an important role in the oxidative stress-induced response in the presence of Ca(2+). Has peroxidase activity using preferentially thioredoxin as a reducing power. The redox state of the mitochondrial GPX2 is regulated by TRX1 and TRX2 (cytoplasmic thioredoxin), and by TRX3 (mitochondrial matrix thioredoxin). Involved in sporulation. In Saccharomyces cerevisiae (strain ATCC 204508 / S288c) (Baker's yeast), this protein is Glutathione peroxidase-like peroxiredoxin 2.